Consider the following 207-residue polypeptide: Probable GTP-binding protein EngB (207 aa).

One can recognise an EngB-type G domain in the interval 23-197 (AGIEVVFAGR…ETVIGRWLFA (175 aa)). GTP is bound by residues 31–38 (GRSNAGKS), 58–62 (GRTQL), 76–79 (DLPG), 143–146 (TKAD), and 176–178 (FSS). Mg(2+)-binding residues include S38 and T60.

It belongs to the TRAFAC class TrmE-Era-EngA-EngB-Septin-like GTPase superfamily. EngB GTPase family. Mg(2+) is required as a cofactor.

Functionally, necessary for normal cell division and for the maintenance of normal septation. The sequence is that of Probable GTP-binding protein EngB from Methylobacillus flagellatus (strain ATCC 51484 / DSM 6875 / VKM B-1610 / KT).